The sequence spans 240 residues: Uridylate kinase (240 aa).

13-16 (KISG) contributes to the ATP binding site. Residue glycine 55 coordinates UMP. 2 residues coordinate ATP: glycine 56 and arginine 60. UMP contacts are provided by residues aspartate 75 and 136-143 (TGNPFFTT). Residues threonine 163, glutamine 164, tyrosine 169, and aspartate 172 each contribute to the ATP site.

Belongs to the UMP kinase family. In terms of assembly, homohexamer.

The protein localises to the cytoplasm. It carries out the reaction UMP + ATP = UDP + ADP. It functions in the pathway pyrimidine metabolism; CTP biosynthesis via de novo pathway; UDP from UMP (UMPK route): step 1/1. Inhibited by UTP. Its function is as follows. Catalyzes the reversible phosphorylation of UMP to UDP. The protein is Uridylate kinase of Paramagnetospirillum magneticum (strain ATCC 700264 / AMB-1) (Magnetospirillum magneticum).